The chain runs to 366 residues: Histidinol-phosphate aminotransferase 2 (366 aa).

The residue at position 226 (Lys-226) is an N6-(pyridoxal phosphate)lysine.

The protein belongs to the class-II pyridoxal-phosphate-dependent aminotransferase family. Histidinol-phosphate aminotransferase subfamily. Homodimer. Requires pyridoxal 5'-phosphate as cofactor.

The enzyme catalyses L-histidinol phosphate + 2-oxoglutarate = 3-(imidazol-4-yl)-2-oxopropyl phosphate + L-glutamate. The protein operates within amino-acid biosynthesis; L-histidine biosynthesis; L-histidine from 5-phospho-alpha-D-ribose 1-diphosphate: step 7/9. The chain is Histidinol-phosphate aminotransferase 2 (hisC2) from Haemophilus influenzae (strain ATCC 51907 / DSM 11121 / KW20 / Rd).